A 61-amino-acid chain; its full sequence is L-amino-acid oxidase (61 aa).

43 to 44 (MA) contributes to the FAD binding site.

The protein belongs to the flavin monoamine oxidase family. FIG1 subfamily. Homodimer; non-covalently linked. FAD serves as cofactor. Post-translationally, N-glycosylated. As to expression, expressed by the venom gland.

It is found in the secreted. It catalyses the reaction an L-alpha-amino acid + O2 + H2O = a 2-oxocarboxylate + H2O2 + NH4(+). The enzyme catalyses L-leucine + O2 + H2O = 4-methyl-2-oxopentanoate + H2O2 + NH4(+). In terms of biological role, catalyzes an oxidative deamination of predominantly hydrophobic and aromatic L-amino acids, thus producing hydrogen peroxide that may contribute to the diverse toxic effects of this enzyme. Shows activity on L-Leu. Exhibits diverse biological activities, such as apoptosis, antibacterial activities against both Gram-negative and Gram-positive bacteria and antiparasitic activities, as well as induction of platelet aggregation. Effects of snake L-amino oxidases on platelets are controversial, since they either induce aggregation or inhibit agonist-induced aggregation. These different effects are probably due to different experimental conditions. This protein may also induce hemorrhage, hemolysis, and edema. This Crotalus durissus cascavella (Northeastern Brazilian rattlesnake) protein is L-amino-acid oxidase.